Consider the following 273-residue polypeptide: Undecaprenyl-diphosphatase (273 aa).

The next 7 membrane-spanning stretches (helical) occupy residues 6–26, 45–65, 90–110, 116–136, 190–210, 222–242, and 252–272; these read SLLIAAILGVVEGLTEFLPVS, AKTFEVVIQLGSILAVVVMFW, LTLIHILLGMIPAVVLGLLFH, LFNPINVMYALVVGGLLLIAA, YAASEFSFLLAVPMMMGATAL, GDIPMFAVGFITAFVVALIAI, and ISFIPFAIYRFIVAAAVYVVF.

It belongs to the UppP family.

Its subcellular location is the cell inner membrane. It catalyses the reaction di-trans,octa-cis-undecaprenyl diphosphate + H2O = di-trans,octa-cis-undecaprenyl phosphate + phosphate + H(+). Its function is as follows. Catalyzes the dephosphorylation of undecaprenyl diphosphate (UPP). Confers resistance to bacitracin. This chain is Undecaprenyl-diphosphatase, found in Escherichia coli O139:H28 (strain E24377A / ETEC).